The chain runs to 508 residues: Protein NODULATION SIGNALING PATHWAY 2 (508 aa).

The tract at residues 75–98 (ITTTTTTTTTTDEEEEEMETTTTT) is disordered. A GRAS domain is found at 108-500 (VGDDSKGLKL…RRLLSASLWT (393 aa)). Positions 115–190 (LKLVHLLMAG…NNHHHHNNNK (76 aa)) are leucine repeat I (LRI). The interval 209–273 (FQLLQDMSPY…NNGPHLRITA (65 aa)) is VHIID. A VHIID motif is present at residues 240–244 (VHVID). Residues 289-321 (ETGRRLTSFAASLGQPFSFHHCRLDSDETFRPS) form a leucine repeat II (LRII) region. The tract at residues 331 to 422 (LVFNCMLNLP…RVFFGPRIAG (92 aa)) is PFYRE. The SAW stretch occupies residues 425-500 (GRIYRTGGEE…RRLLSASLWT (76 aa)).

This sequence belongs to the GRAS family. As to quaternary structure, interacts with RAM1. Interacts with IPN2 and RAD1. Expressed in roots, shoots and leaves.

It localises to the nucleus membrane. The protein localises to the endoplasmic reticulum. In terms of biological role, transcriptional regulator essential for Nod-factor-induced gene expression. Acts downstream of calcium spiking and DMI3, a calcium/calmodulin-dependent protein kinase (CCaMK). Transcription factor involved in the control of strigolactone biosynthesis in roots through the activation of the beta-carotene isomerase D27, which participates in a pathway leading to biosynthesis of strigolactones. In Medicago truncatula (Barrel medic), this protein is Protein NODULATION SIGNALING PATHWAY 2.